Reading from the N-terminus, the 213-residue chain is Glycerol-3-phosphate acyltransferase (213 aa).

6 consecutive transmembrane segments (helical) span residues 2 to 22, 54 to 74, 80 to 100, 110 to 130, 143 to 163, and 165 to 185; these read ITIVLLILAYLLGSIPSGLWI, MATFVIDFFKGTLATLLPIMF, SPLIFGLLAVIGHTFPIFAGF, AGVVFGFAPVFCLYLAVVFFG, VTASIAAVIGVLLFPLFGFIL, and NYDPLFIAIILALASLIIIRH.

The protein belongs to the PlsY family. As to quaternary structure, probably interacts with PlsX.

The protein localises to the cell membrane. The enzyme catalyses an acyl phosphate + sn-glycerol 3-phosphate = a 1-acyl-sn-glycero-3-phosphate + phosphate. Its pathway is lipid metabolism; phospholipid metabolism. In terms of biological role, catalyzes the transfer of an acyl group from acyl-phosphate (acyl-PO(4)) to glycerol-3-phosphate (G3P) to form lysophosphatidic acid (LPA). This enzyme utilizes acyl-phosphate as fatty acyl donor, but not acyl-CoA or acyl-ACP. The sequence is that of Glycerol-3-phosphate acyltransferase from Streptococcus pneumoniae (strain Taiwan19F-14).